The sequence spans 361 residues: AP2/ERF and B3 domain-containing transcription repressor TEM1 (361 aa).

Positions 1-73 (MEYSCVDDSS…SRKLPSSKYK (73 aa)) are disordered. Residues 9–27 (SSTTSESLSISTTPKPTTT) are compositionally biased toward low complexity. Positions 71-126 (KYKGVVPQPNGRWGAQIYEKHQRVWLGTFNEEEEAASSYDIAVRRFRGRDAVTNFK) form a DNA-binding region, AP2/ERF. Residues 195–306 (FEKTVTPSDV…QLYIHWKVRS (112 aa)) constitute a DNA-binding region (TF-B3).

This sequence belongs to the AP2/ERF transcription factor family. RAV subfamily. As to quaternary structure, interacts with FT. In terms of tissue distribution, expressed in leaves.

It localises to the nucleus. In terms of biological role, transcriptional repressor of flowering time on long day plants. Acts directly on FT expression by binding 5'-CAACA-3' and 5'-CACCTG-3 sequences. Functionally redundant with TEM2. The sequence is that of AP2/ERF and B3 domain-containing transcription repressor TEM1 (TEM1) from Arabidopsis thaliana (Mouse-ear cress).